Reading from the N-terminus, the 334-residue chain is Photosystem II assembly protein Ycf48 (334 aa).

Positions 1 to 22 (MAKMLKLWRLVLLAAFSLLLMA) are cleaved as a signal peptide.

The protein belongs to the Ycf48 family. Part of early PSII assembly complexes which includes D1 (psbA) and PsbI; not found in mature PSII. Binds to the lumenal side of PSII complexes. Interacts with YidC.

It is found in the cellular thylakoid lumen. Its function is as follows. A factor required for optimal assembly of photosystem II (PSII), acting in the early stages of PSII assembly. Also plays a role in replacement of photodamaged D1 (psbA). Assists YidC in synthesis of chlorophyll-binding proteins. In Synechococcus sp. (strain JA-3-3Ab) (Cyanobacteria bacterium Yellowstone A-Prime), this protein is Photosystem II assembly protein Ycf48.